Consider the following 285-residue polypeptide: Bifunctional protein FolD (285 aa).

NADP(+) is bound by residues Gly165 to Ser167 and Ser190.

It belongs to the tetrahydrofolate dehydrogenase/cyclohydrolase family. As to quaternary structure, homodimer.

The catalysed reaction is (6R)-5,10-methylene-5,6,7,8-tetrahydrofolate + NADP(+) = (6R)-5,10-methenyltetrahydrofolate + NADPH. It carries out the reaction (6R)-5,10-methenyltetrahydrofolate + H2O = (6R)-10-formyltetrahydrofolate + H(+). The protein operates within one-carbon metabolism; tetrahydrofolate interconversion. Its function is as follows. Catalyzes the oxidation of 5,10-methylenetetrahydrofolate to 5,10-methenyltetrahydrofolate and then the hydrolysis of 5,10-methenyltetrahydrofolate to 10-formyltetrahydrofolate. The sequence is that of Bifunctional protein FolD from Burkholderia multivorans (strain ATCC 17616 / 249).